The chain runs to 77 residues: MIIPWKELETETLNSLIESFVLREGTDYGEHERSLEQKVEDVRRQLKNGEVLLVWSELHETINIMPRGQFRAGQEEI.

This sequence belongs to the UPF0270 family.

This chain is UPF0270 protein Spro_4577, found in Serratia proteamaculans (strain 568).